The primary structure comprises 127 residues: NADPH-dependent 7-cyano-7-deazaguanine reductase (127 aa).

The active-site Thioimide intermediate is C40. The active-site Proton donor is D47. Residues 62-64 (VEL) and 81-82 (HE) each bind substrate.

This sequence belongs to the GTP cyclohydrolase I family. QueF type 1 subfamily.

The protein resides in the cytoplasm. It carries out the reaction 7-aminomethyl-7-carbaguanine + 2 NADP(+) = 7-cyano-7-deazaguanine + 2 NADPH + 3 H(+). The protein operates within tRNA modification; tRNA-queuosine biosynthesis. In terms of biological role, catalyzes the NADPH-dependent reduction of 7-cyano-7-deazaguanine (preQ0) to 7-aminomethyl-7-deazaguanine (preQ1). The protein is NADPH-dependent 7-cyano-7-deazaguanine reductase of Campylobacter lari (strain RM2100 / D67 / ATCC BAA-1060).